The chain runs to 191 residues: Peptidyl-tRNA hydrolase (191 aa).

Y14 provides a ligand contact to tRNA. The active-site Proton acceptor is the H19. TRNA is bound by residues Y64, N66, and N112.

It belongs to the PTH family. In terms of assembly, monomer.

Its subcellular location is the cytoplasm. It catalyses the reaction an N-acyl-L-alpha-aminoacyl-tRNA + H2O = an N-acyl-L-amino acid + a tRNA + H(+). In terms of biological role, hydrolyzes ribosome-free peptidyl-tRNAs (with 1 or more amino acids incorporated), which drop off the ribosome during protein synthesis, or as a result of ribosome stalling. Catalyzes the release of premature peptidyl moieties from peptidyl-tRNA molecules trapped in stalled 50S ribosomal subunits, and thus maintains levels of free tRNAs and 50S ribosomes. The chain is Peptidyl-tRNA hydrolase from Clostridium beijerinckii (strain ATCC 51743 / NCIMB 8052) (Clostridium acetobutylicum).